The chain runs to 491 residues: Protein nucleotidyltransferase YdiU (491 aa).

Residues glycine 88, glycine 90, arginine 91, lysine 111, aspartate 123, glycine 124, arginine 174, and arginine 181 each coordinate ATP. The Proton acceptor role is filled by aspartate 250. Positions 251 and 260 each coordinate Mg(2+). Residue aspartate 260 participates in ATP binding.

The protein belongs to the SELO family. Mg(2+) is required as a cofactor. Requires Mn(2+) as cofactor.

It catalyses the reaction L-seryl-[protein] + ATP = 3-O-(5'-adenylyl)-L-seryl-[protein] + diphosphate. It carries out the reaction L-threonyl-[protein] + ATP = 3-O-(5'-adenylyl)-L-threonyl-[protein] + diphosphate. The enzyme catalyses L-tyrosyl-[protein] + ATP = O-(5'-adenylyl)-L-tyrosyl-[protein] + diphosphate. The catalysed reaction is L-histidyl-[protein] + UTP = N(tele)-(5'-uridylyl)-L-histidyl-[protein] + diphosphate. It catalyses the reaction L-seryl-[protein] + UTP = O-(5'-uridylyl)-L-seryl-[protein] + diphosphate. It carries out the reaction L-tyrosyl-[protein] + UTP = O-(5'-uridylyl)-L-tyrosyl-[protein] + diphosphate. Functionally, nucleotidyltransferase involved in the post-translational modification of proteins. It can catalyze the addition of adenosine monophosphate (AMP) or uridine monophosphate (UMP) to a protein, resulting in modifications known as AMPylation and UMPylation. The polypeptide is Protein nucleotidyltransferase YdiU (Bradyrhizobium diazoefficiens (strain JCM 10833 / BCRC 13528 / IAM 13628 / NBRC 14792 / USDA 110)).